The sequence spans 235 residues: Glucosamine-6-phosphate deaminase (235 aa).

The active-site Proton acceptor; for enolization step is the Asp62. The active-site For ring-opening step is Asn128. Residue His130 is the Proton acceptor; for ring-opening step of the active site. Glu135 (for ring-opening step) is an active-site residue.

The protein belongs to the glucosamine/galactosamine-6-phosphate isomerase family. NagB subfamily.

The enzyme catalyses alpha-D-glucosamine 6-phosphate + H2O = beta-D-fructose 6-phosphate + NH4(+). It functions in the pathway amino-sugar metabolism; N-acetylneuraminate degradation; D-fructose 6-phosphate from N-acetylneuraminate: step 5/5. In terms of biological role, catalyzes the reversible isomerization-deamination of glucosamine 6-phosphate (GlcN6P) to form fructose 6-phosphate (Fru6P) and ammonium ion. The sequence is that of Glucosamine-6-phosphate deaminase from Streptococcus pneumoniae serotype 2 (strain D39 / NCTC 7466).